The chain runs to 348 residues: MSDRLTLLRPDDWHIHLRDGAVLTNTVADVARTFGRAIIMPNLVPPVRNAAEADGYRQRILAARPAGSRFEPLMVLYLTDRTQPEEIREAKASGFVHAAKLYPAGATTNSDSGVTSIDKIFPVLEAMAEAGMPLLIHGEVTRGDVDVFDREKIFIDEHMRRVVERFPTLKVVFEHITTGDAVQFVNEASANVGATITAHHLLYNRNHMLVGGIRPHFYCLPILKRNTHQEALLDAATSGSAKFFLGTDSAPHAQHAKEAACGCAGCYTAYAAIELYAEAFEQRNALDKLEAFASLNGPRFYGLPANTDRITLVRDEWTAPTSLPFGELTVIPLRAGEKLRWRLLEEHA.

Zn(2+)-binding residues include H14 and H16. Substrate contacts are provided by residues 16-18 (HLR) and N42. Residues K100, H137, and H175 each coordinate Zn(2+). The residue at position 100 (K100) is an N6-carboxylysine. Residue H137 coordinates substrate. Substrate is bound at residue L220. D248 provides a ligand contact to Zn(2+). D248 is an active-site residue. H252 and A264 together coordinate substrate.

Belongs to the metallo-dependent hydrolases superfamily. DHOase family. Class II DHOase subfamily. As to quaternary structure, homodimer. The cofactor is Zn(2+).

The enzyme catalyses (S)-dihydroorotate + H2O = N-carbamoyl-L-aspartate + H(+). It participates in pyrimidine metabolism; UMP biosynthesis via de novo pathway; (S)-dihydroorotate from bicarbonate: step 3/3. Its function is as follows. Catalyzes the reversible cyclization of carbamoyl aspartate to dihydroorotate. The protein is Dihydroorotase of Pseudomonas fluorescens (strain Pf0-1).